We begin with the raw amino-acid sequence, 365 residues long: Protein RecA (365 aa).

73-80 (GPESSGKT) is an ATP binding site.

It belongs to the RecA family.

Its subcellular location is the cytoplasm. Functionally, can catalyze the hydrolysis of ATP in the presence of single-stranded DNA, the ATP-dependent uptake of single-stranded DNA by duplex DNA, and the ATP-dependent hybridization of homologous single-stranded DNAs. It interacts with LexA causing its activation and leading to its autocatalytic cleavage. This is Protein RecA from Prochlorococcus marinus (strain MIT 9301).